The following is a 492-amino-acid chain: MKLSVFRLSYWNRRGSSFRSSPSLDPSFDGKSPSSVFWFVIHGLCCLISLILGFRFSHLVLFFLFSTSVTNLYTTPFLFAGNGGVSQLLRLKPLETATNSTVKKNSRVVVGRHGIRIRPWPHPNPIEVLRAHQLLVRVQKEQKSMYGVRSPRTVIVVTPTYVRTFQALHLTGVMHSLMLVPYDLVWIVVEAGGITNETASFIAKSGLKTIHLGFDQKMPNTWEDRHKLETKMRLHALRVVREKKLDGIVMFADDSNMHSMELFDEIQTVKWFGALSVGILAHSGNADELSSILKNEQGKNKEKPSMPIQGPSCNSSEKLVGWHIFNTQPYAKKTAVYIDEKAPVMPSKMEWSGFVLNSRLLWKESLDDKPAWVKDLSLLDDGYAEIESPLSLVKDPSMVEPLGSCGRRVLLWWLRVEARADSKFPPGWIIKSPLEITVPSKRTPWPDSSSELPAAAIKEAKSNSKPRVSKSKSYKEKQEPKAFDGVKVSATS.

The Cytoplasmic segment spans residues 1–33 (MKLSVFRLSYWNRRGSSFRSSPSLDPSFDGKSP). Residues 34–54 (SSVFWFVIHGLCCLISLILGF) form a helical; Signal-anchor for type II membrane protein membrane-spanning segment. At 55–492 (RFSHLVLFFL…FDGVKVSATS (438 aa)) the chain is on the lumenal side. N-linked (GlcNAc...) asparagine glycans are attached at residues Asn99, Asn196, and Asn314. The interval 457-492 (IKEAKSNSKPRVSKSKSYKEKQEPKAFDGVKVSATS) is disordered. A compositionally biased stretch (basic and acidic residues) spans 473–484 (SYKEKQEPKAFD).

It belongs to the glycosyltransferase 43 family. Expressed in developing interfascicular fibers and xylem cells in stems and developing secondary xylem in roots.

It localises to the golgi apparatus membrane. Its function is as follows. Involved in the synthesis of the hemicellulose glucuronoxylan, a major component of secondary cell walls. Probably involved in the elongation of glucuronoxylan xylosyl backbone. The sequence is that of Probable beta-1,4-xylosyltransferase IRX14H (IRX14H) from Arabidopsis thaliana (Mouse-ear cress).